The primary structure comprises 118 residues: MISKPDKNKIRQKRHRRVRGKLSGTADRPRLNIFRSNTGIYAQVIDDVAGVTLASASTLDKEVSKGTKTEQAVVVGKLVAERAVAKGISEVVFDRGGYLYHGRVKALADAARENGLKF.

The tract at residues 1–24 (MISKPDKNKIRQKRHRRVRGKLSG) is disordered. Over residues 10-20 (IRQKRHRRVRG) the composition is skewed to basic residues.

This sequence belongs to the universal ribosomal protein uL18 family. Part of the 50S ribosomal subunit; part of the 5S rRNA/L5/L18/L25 subcomplex. Contacts the 5S and 23S rRNAs.

In terms of biological role, this is one of the proteins that bind and probably mediate the attachment of the 5S RNA into the large ribosomal subunit, where it forms part of the central protuberance. This Streptococcus mutans serotype c (strain ATCC 700610 / UA159) protein is Large ribosomal subunit protein uL18.